The chain runs to 485 residues: Inosine-5'-monophosphate dehydrogenase (485 aa).

CBS domains are found at residues 99–154 and 156–212; these read IVED…TVKE and MTRE…KNAV. NAD(+) contacts are provided by residues Asp-247 and 294–296; that span reads GIG. Residues Gly-296 and Gly-298 each contribute to the K(+) site. Ser-299 serves as a coordination point for IMP. Cys-301 is a K(+) binding site. The Thioimidate intermediate role is filled by Cys-301. Residues 334 to 336, 357 to 358, and 381 to 385 each bind IMP; these read DGG, GN, and YRGMG. The Proton acceptor role is filled by Arg-397. Glu-412 is an IMP binding site. Positions 466, 467, and 468 each coordinate K(+).

Belongs to the IMPDH/GMPR family. As to quaternary structure, homotetramer. K(+) serves as cofactor.

It carries out the reaction IMP + NAD(+) + H2O = XMP + NADH + H(+). It participates in purine metabolism; XMP biosynthesis via de novo pathway; XMP from IMP: step 1/1. Its activity is regulated as follows. Mycophenolic acid (MPA) is a non-competitive inhibitor that prevents formation of the closed enzyme conformation by binding to the same site as the amobile flap. In contrast, mizoribine monophosphate (MZP) is a competitive inhibitor that induces the closed conformation. MPA is a potent inhibitor of mammalian IMPDHs but a poor inhibitor of the bacterial enzymes. MZP is a more potent inhibitor of bacterial IMPDH. Functionally, catalyzes the conversion of inosine 5'-phosphate (IMP) to xanthosine 5'-phosphate (XMP), the first committed and rate-limiting step in the de novo synthesis of guanine nucleotides, and therefore plays an important role in the regulation of cell growth. The chain is Inosine-5'-monophosphate dehydrogenase from Pyrococcus furiosus (strain ATCC 43587 / DSM 3638 / JCM 8422 / Vc1).